The following is a 258-amino-acid chain: Venom plasminogen activator TSV-PA (258 aa).

An N-terminal signal peptide occupies residues methionine 1–alanine 18. A propeptide spanning residues glutamine 19 to leucine 24 is cleaved from the precursor. Positions valine 25–alanine 249 constitute a Peptidase S1 domain. 6 disulfides stabilise this stretch: cysteine 31-cysteine 163, cysteine 50-cysteine 66, cysteine 98-cysteine 256, cysteine 142-cysteine 210, cysteine 174-cysteine 189, and cysteine 200-cysteine 225. Catalysis depends on charge relay system residues histidine 65 and aspartate 110. Asparagine 185 carries N-linked (GlcNAc...) asparagine glycosylation. Serine 204 functions as the Charge relay system in the catalytic mechanism.

The protein belongs to the peptidase S1 family. Snake venom subfamily. As to quaternary structure, monomer. In terms of tissue distribution, expressed by the venom gland.

The protein localises to the secreted. In terms of biological role, snake venom serine protease that activates plasminogen. This is Venom plasminogen activator TSV-PA from Trimeresurus stejnegeri (Chinese green tree viper).